The sequence spans 159 residues: Transcription elongation factor GreA (159 aa).

Positions 2–77 form a coiled coil; that stretch reads EENKEFLLTQ…LENMVRKAVI (76 aa).

Belongs to the GreA/GreB family.

Functionally, necessary for efficient RNA polymerase transcription elongation past template-encoded arresting sites. The arresting sites in DNA have the property of trapping a certain fraction of elongating RNA polymerases that pass through, resulting in locked ternary complexes. Cleavage of the nascent transcript by cleavage factors such as GreA or GreB allows the resumption of elongation from the new 3'terminus. GreA releases sequences of 2 to 3 nucleotides. This is Transcription elongation factor GreA from Clostridioides difficile (strain 630) (Peptoclostridium difficile).